A 723-amino-acid polypeptide reads, in one-letter code: Nuclear intron maturase 3, mitochondrial (723 aa).

The N-terminal 26 residues, 1–26, are a transit peptide targeting the mitochondrion; that stretch reads MVLRLRVHSFYNRGISFLVSSSLRNL. The segment at 532 to 597 is intron maturase type-2; degenerate; that stretch reads VSAPEELVRK…HYTKDLRVSD (66 aa). Residues 646–700 form a THAP-type zinc finger; it reads CAASFCERSDTIMHRVHLLQNRLHINPLDEEKWVPGMGTIHSALNRKCLPLCSTH.

Belongs to the plant nuclear intron maturase (nMat) family.

It localises to the mitochondrion. Nuclear-encoded maturase required for splicing of group-II introns in mitochondria. Necessary for mitochondrial biogenesis during early developmental stages. The chain is Nuclear intron maturase 3, mitochondrial from Arabidopsis thaliana (Mouse-ear cress).